The following is a 209-amino-acid chain: Homeobox protein ceh-2 (209 aa).

Residues 1–14 (MTLKFSVERLVDSE) show a composition bias toward basic and acidic residues. Disordered regions lie at residues 1–46 (MTLK…KSGK) and 181–209 (HKRV…KSVS). Acidic residues predominate over residues 15–24 (KESEEADVEE). Positions 126–185 (NKRIRTAFSASQLIQLEKAFEGNHYVVGNERKQLAAKLSLTETQVKVWFQNRRTKHKRVR) form a DNA-binding region, homeobox.

The protein belongs to the EMX homeobox family. As to expression, in the anterior pharynx, expressed in the I3 interneuron, the NSM and M3 motor neuron pairs, the three m2 muscle cells and the three e2 epithelial cells (at protein level).

It localises to the nucleus. Its function is as follows. Required for activity of the M3 pharyngeal motor neuron. This chain is Homeobox protein ceh-2, found in Caenorhabditis elegans.